Here is a 190-residue protein sequence, read N- to C-terminus: Glutamyl-tRNA(Gln) amidotransferase subunit C, mitochondrial (190 aa).

A mitochondrion-targeting transit peptide spans 1-96 (MISFQIILQQ…VLNLKQAVRF (96 aa)). Positions 28–57 (KSNSTAVGSSDEDDEIYVPKKPIPSPIDQS) are disordered.

The protein belongs to the GatC family. As to quaternary structure, subunit of the heterotrimeric GatCAB amidotransferase (AdT) complex, composed of A, B and C subunits.

The protein resides in the mitochondrion. It carries out the reaction L-glutamyl-tRNA(Gln) + L-glutamine + ATP + H2O = L-glutaminyl-tRNA(Gln) + L-glutamate + ADP + phosphate + H(+). Its function is as follows. Allows the formation of correctly charged Gln-tRNA(Gln) through the transamidation of misacylated Glu-tRNA(Gln) in the mitochondria. The reaction takes place in the presence of glutamine and ATP through an activated gamma-phospho-Glu-tRNA(Gln). The sequence is that of Glutamyl-tRNA(Gln) amidotransferase subunit C, mitochondrial from Loa loa (Eye worm).